The sequence spans 149 residues: UPF0178 protein Cphy_3042 (149 aa).

The span at 112 to 128 (QRRHGKQNLHSKNNKKR) shows a compositional bias: basic residues. The disordered stretch occupies residues 112–132 (QRRHGKQNLHSKNNKKRTTGD).

Belongs to the UPF0178 family.

This chain is UPF0178 protein Cphy_3042, found in Lachnoclostridium phytofermentans (strain ATCC 700394 / DSM 18823 / ISDg) (Clostridium phytofermentans).